A 616-amino-acid polypeptide reads, in one-letter code: MMQVLLVTISLAVFPYQGSSIILESGNVNDYEVVYPQKVTAMPKGAVKQPEQKYEDAMQYEFKVKGEPVVLLLEKNKDLFSEDYSETHYSPDGREITTNPPVEDHCYYHGRIQNDADSSASISACNGLKGHFMLQGETYLIEPLKLPDSEAHAVYKYENVEKEDEAPKMCGVTQTNWESDEPIKKASQLNLTPEQRRYLNSPKYIKLVIVADYIMFLKYGRSLITIRTRIYEIVNILNVIYRVLNIYIALLGLEIWNNGDKINVLPETKVTLDLFGKWRERDLLNRRKHDNAQLLTDINFNGPTAGLGYVGSMCDPQYSAGIVQDHNKVNFLVALAMAHEMGHNLGMEHDEIHCTCGAKSCIMSGTLSCEASIRFSNCSREEHQKYLINKMPQCILNKPLKTDIVSPAVCGNYLVELGEDCDCGSPRDCQNPCCNAATCKLTPGSQCADGECCDQCKFRRAGTVCRPANGECDVSDLCTGQSAECPTDQFQRNGQPCQNNNGYCYSGTCPIMGKQCISLFGASATVAQDACFQFNSLGNEYGYCRKENGRKIPCAPQDVKCGRLYCFDNLPEHKNPCQIYYTPSDENKGMVDPGTKCGDGKACSSNRQCVDVNTAY.

The N-terminal stretch at 1–20 (MMQVLLVTISLAVFPYQGSS) is a signal peptide. Residues 21–194 (IILESGNVND…KASQLNLTPE (174 aa)) constitute a propeptide that is removed on maturation. At glutamine 195 the chain carries Pyrrolidone carboxylic acid. In terms of domain architecture, Peptidase M12B spans 203–399 (KYIKLVIVAD…KMPQCILNKP (197 aa)). Cystine bridges form between cysteine 314/cysteine 394, cysteine 354/cysteine 378, and cysteine 356/cysteine 361. Zn(2+) is bound at residue histidine 339. Glutamate 340 is a catalytic residue. Zn(2+)-binding residues include histidine 343 and histidine 349. The N-linked (GlcNAc...) asparagine glycan is linked to asparagine 377. Residues 407–493 (PAVCGNYLVE…ECPTDQFQRN (87 aa)) enclose the Disintegrin domain. 6 residues coordinate Ca(2+): valine 409, asparagine 412, leucine 414, glutamate 416, glutamate 419, and aspartate 422. 14 cysteine pairs are disulfide-bonded: cysteine 410/cysteine 439, cysteine 421/cysteine 434, cysteine 423/cysteine 429, cysteine 433/cysteine 456, cysteine 447/cysteine 453, cysteine 452/cysteine 478, cysteine 465/cysteine 485, cysteine 472/cysteine 504, cysteine 497/cysteine 509, cysteine 516/cysteine 566, cysteine 531/cysteine 577, cysteine 544/cysteine 554, cysteine 561/cysteine 603, and cysteine 597/cysteine 609. The D/ECD-tripeptide motif lies at 471 to 473 (ECD).

This sequence belongs to the venom metalloproteinase (M12B) family. P-III subfamily. P-IIIc sub-subfamily. In terms of assembly, heterodimer; disulfide-linked. Zn(2+) is required as a cofactor. The N-terminus is blocked. In terms of tissue distribution, expressed by the venom gland.

The protein localises to the secreted. With respect to regulation, inhibited by EDTA or 1,10-phenanthroline. Not inhibited by PMSF. Snake venom zinc metalloprotease that hydrolyzes the alpha-chain (FGA) and more slowly the beta-chain (FGB) of fibrinogen, without affecting the gamma-chain. Cleaves alpha-chain of fibrinogen at '432-Lys-|-Leu-433' and '535-Pro-|-Met-536' bonds. Induces apoptosis in vascular endothelial cells and inhibits endothelial cell adhesion to extracellular matrix proteins such as fibrinogen, fibronectin, vitronectin, collagen I, and collagen IV. Also hydrolyzes azocasein, and insulin B-chain (at the '38-Ala-|-Leu-39' bond). In Macrovipera lebetinus (Levantine viper), this protein is Zinc metalloproteinase-disintegrin-like VLAIP-A.